Here is an 81-residue protein sequence, read N- to C-terminus: Adipogenin (81 aa).

A helical membrane pass occupies residues 16-36 (FLASWLCLPVGLLLFLLIVWL).

The protein belongs to the adipogenin family.

It is found in the membrane. It localises to the nucleus. Functionally, plays a role in stimulating adipocyte differentiation and development. This chain is Adipogenin, found in Sus scrofa (Pig).